The primary structure comprises 196 residues: Histone H1.0-B (196 aa).

Disordered regions lie at residues 1-29 (MAEN…PKYS) and 86-196 (GVGA…GRKK). Residues 24 to 97 (DHPKYSDMIL…GASGSFRLAK (74 aa)) form the H15 domain. The segment covering 104 to 196 (PAKKPKKEIK…ASPKKSGRKK (93 aa)) has biased composition (basic residues).

This sequence belongs to the histone H1/H5 family.

The protein localises to the nucleus. The protein resides in the chromosome. In terms of biological role, histones H1 are necessary for the condensation of nucleosome chains into higher-order structures. The histones H1.0 are found in cells that are in terminal stages of differentiation or that have low rates of cell division. This Xenopus laevis (African clawed frog) protein is Histone H1.0-B (h1-0-b).